The sequence spans 115 residues: Somatostatin-1 (115 aa).

Residues 1-24 form the signal peptide; sequence MQSCRVQCALTLLSLALAINSISA. A propeptide spanning residues 25 to 99 is cleaved from the precursor; the sequence is APTDPRLRQF…NSSPALAPRE (75 aa). Positions 60–79 are disordered; the sequence is SQTDNEALESDDLPRGAEQD. An intrachain disulfide couples C104 to C115.

This sequence belongs to the somatostatin family.

It localises to the secreted. Functionally, somatostatin inhibits the release of somatotropin. This is Somatostatin-1 (sst1) from Pelophylax ridibundus (Marsh frog).